A 1388-amino-acid polypeptide reads, in one-letter code: Rho-associated protein kinase 2 (1388 aa).

Residues 1 to 24 (MSRPPPTGKMPGAPEAVSGDGAGA) are disordered. One can recognise a Protein kinase domain in the interval 92-354 (YDVVKVIGRG…VEEIKQHPFF (263 aa)). ATP is bound by residues 98–106 (IGRGAFGEV) and K121. D214 serves as the catalytic Proton acceptor. The region spanning 357–425 (DQWNWDNIRE…YRENLLLSDS (69 aa)) is the AGC-kinase C-terminal domain. The tract at residues 363-784 (NIRETAAPVV…INELLKQKDV (422 aa)) is interaction with PPP1R12A. Residues 373–420 (PELSSDIDSSNFDDIEDDKGDVETFPIPKAFVGNQLPFIGFTYYRENL) form an interaction with NPM1 region. T414 bears the Phosphothreonine; by ROCK2 mark. The REM-1 domain maps to 497–573 (ALRQLEREKA…LDETNALLRT (77 aa)). Residues 512-530 (NAEYQRKADHEADKKRNLE) show a composition bias toward basic and acidic residues. The disordered stretch occupies residues 512-532 (NAEYQRKADHEADKKRNLEND). Y722 carries the post-translational modification Phosphotyrosine; by SRC. In terms of domain architecture, RhoBD spans 979 to 1047 (TSDVANLANE…LAEIMNRKEP (69 aa)). The tract at residues 979–1047 (TSDVANLANE…LAEIMNRKEP (69 aa)) is RHOA binding. Residues 1054-1126 (TDMRRKEKEN…EQLRSQLQAL (73 aa)) adopt a coiled-coil conformation. S1137 bears the Phosphoserine mark. The 200-residue stretch at 1150 to 1349 (ESRLEGWLSL…WVSRLVKKIP (200 aa)) folds into the PH domain. T1212 bears the Phosphothreonine mark. The Phorbol-ester/DAG-type zinc-finger motif lies at 1260–1315 (GHEFIPTLYHFPTNCEACMKPLWHMFKPPPALECRRCHIKCHKDHMDKKEEIIAPC). The tract at residues 1345–1388 (VKKIPKKPPAPDPFARSSPRTSMKIQQNQSIRRPSRQLAANKPS) is disordered. Phosphoserine occurs at positions 1362 and 1374. Residues 1362–1376 (SPRTSMKIQQNQSIR) show a composition bias toward polar residues.

Belongs to the protein kinase superfamily. AGC Ser/Thr protein kinase family. As to quaternary structure, homodimer. Interacts with IRS1. Interacts with RAF1. Interacts with RHOA (activated by GTP), RHOB and RHOC. Interacts with PPP1R12A. Interacts with EP300. Interacts with CHORDC1. Interacts with BRCA2. Interacts with NPM1; this interaction enhances ROCK2 activity. Interacts with SORL1. Interacts with PJVK. The cofactor is Mg(2+). Autophosphorylated. Phosphorylation at Tyr-722 reduces its binding to RHOA and is crucial for focal adhesion dynamics. Dephosphorylation by PTPN11 stimulates its RHOA binding activity. In terms of processing, cleaved by granzyme B during apoptosis. This leads to constitutive activation of the kinase and membrane blebbing.

Its subcellular location is the cytoplasm. It localises to the cell membrane. The protein localises to the nucleus. The protein resides in the cytoskeleton. It is found in the microtubule organizing center. Its subcellular location is the centrosome. It carries out the reaction L-seryl-[protein] + ATP = O-phospho-L-seryl-[protein] + ADP + H(+). The enzyme catalyses L-threonyl-[protein] + ATP = O-phospho-L-threonyl-[protein] + ADP + H(+). With respect to regulation, activated by RHOA binding. Inhibited by Y-27632. Functionally, protein kinase which is a key regulator of actin cytoskeleton and cell polarity. Involved in regulation of smooth muscle contraction, actin cytoskeleton organization, stress fiber and focal adhesion formation, neurite retraction, cell adhesion and motility via phosphorylation of ADD1, BRCA2, CNN1, EZR, DPYSL2, EP300, MSN, MYL9/MLC2, NPM1, RDX, PPP1R12A and VIM. Phosphorylates SORL1 and IRF4. Acts as a negative regulator of VEGF-induced angiogenic endothelial cell activation. Positively regulates the activation of p42/MAPK1-p44/MAPK3 and of p90RSK/RPS6KA1 during myogenic differentiation. Plays an important role in the timely initiation of centrosome duplication. Inhibits keratinocyte terminal differentiation. May regulate closure of the eyelids and ventral body wall through organization of actomyosin bundles. Plays a critical role in the regulation of spine and synaptic properties in the hippocampus. Plays an important role in generating the circadian rhythm of the aortic myofilament Ca(2+) sensitivity and vascular contractility by modulating the myosin light chain phosphorylation. The protein is Rho-associated protein kinase 2 (ROCK2) of Sus scrofa (Pig).